A 276-amino-acid polypeptide reads, in one-letter code: Dermonecrotic toxin LlSicTox-alphaIV2i (276 aa).

His5 is an active-site residue. 2 residues coordinate Mg(2+): Glu25 and Asp27. The Nucleophile role is filled by His41. Cystine bridges form between Cys45/Cys51 and Cys47/Cys193. Asp85 contacts Mg(2+).

The protein belongs to the arthropod phospholipase D family. Class II subfamily. It depends on Mg(2+) as a cofactor. In terms of tissue distribution, expressed by the venom gland.

The protein resides in the secreted. It carries out the reaction an N-(acyl)-sphingosylphosphocholine = an N-(acyl)-sphingosyl-1,3-cyclic phosphate + choline. It catalyses the reaction an N-(acyl)-sphingosylphosphoethanolamine = an N-(acyl)-sphingosyl-1,3-cyclic phosphate + ethanolamine. The catalysed reaction is a 1-acyl-sn-glycero-3-phosphocholine = a 1-acyl-sn-glycero-2,3-cyclic phosphate + choline. The enzyme catalyses a 1-acyl-sn-glycero-3-phosphoethanolamine = a 1-acyl-sn-glycero-2,3-cyclic phosphate + ethanolamine. Functionally, dermonecrotic toxins cleave the phosphodiester linkage between the phosphate and headgroup of certain phospholipids (sphingolipid and lysolipid substrates), forming an alcohol (often choline) and a cyclic phosphate. This toxin acts on sphingomyelin (SM). It may also act on ceramide phosphoethanolamine (CPE), lysophosphatidylcholine (LPC) and lysophosphatidylethanolamine (LPE), but not on lysophosphatidylserine (LPS), and lysophosphatidylglycerol (LPG). It acts by transphosphatidylation, releasing exclusively cyclic phosphate products as second products. Induces dermonecrosis, hemolysis, increased vascular permeability, edema, inflammatory response, and platelet aggregation. The sequence is that of Dermonecrotic toxin LlSicTox-alphaIV2i from Loxosceles laeta (South American recluse spider).